A 334-amino-acid chain; its full sequence is tRNA U34 carboxymethyltransferase (334 aa).

Residues lysine 91, tryptophan 105, lysine 110, glycine 130, 152–154 (DPT), 181–182 (IE), methionine 196, tyrosine 200, and arginine 315 contribute to the carboxy-S-adenosyl-L-methionine site.

This sequence belongs to the class I-like SAM-binding methyltransferase superfamily. CmoB family. In terms of assembly, homotetramer.

It carries out the reaction carboxy-S-adenosyl-L-methionine + 5-hydroxyuridine(34) in tRNA = 5-carboxymethoxyuridine(34) in tRNA + S-adenosyl-L-homocysteine + H(+). Functionally, catalyzes carboxymethyl transfer from carboxy-S-adenosyl-L-methionine (Cx-SAM) to 5-hydroxyuridine (ho5U) to form 5-carboxymethoxyuridine (cmo5U) at position 34 in tRNAs. In Klebsiella pneumoniae (strain 342), this protein is tRNA U34 carboxymethyltransferase.